The chain runs to 296 residues: MSTRYIAGSAVALVTPFRKNNTIDTDALKKLVQFHIEAGTDIIIPCGTTGESPTLTSDEQFRIIRIVSEEADGKIMVAAGAGTNATAHAVELAKNAEKAGASAILSVAPYYNKPSQEGFYQHFRHIAEAVSVPIIVYNVPGRTGSNLSASTILRLARDFANIAAVKEASDNMNQIMELLEERPENFSVMTGEDMLILPFMAMGGDGVISVAANQIPSTVKQLVIAAKQGNLDEARALNRKYRRLFKMNFIESNPVPVKYCLSLMGMIEENYRLPLVPLSDENKAVLKKEMEFLGLI.

Thr49 provides a ligand contact to pyruvate. The active-site Proton donor/acceptor is Tyr137. The active-site Schiff-base intermediate with substrate is the Lys166. A pyruvate-binding site is contributed by Ile208.

This sequence belongs to the DapA family. In terms of assembly, homotetramer; dimer of dimers.

The protein localises to the cytoplasm. It carries out the reaction L-aspartate 4-semialdehyde + pyruvate = (2S,4S)-4-hydroxy-2,3,4,5-tetrahydrodipicolinate + H2O + H(+). It participates in amino-acid biosynthesis; L-lysine biosynthesis via DAP pathway; (S)-tetrahydrodipicolinate from L-aspartate: step 3/4. Catalyzes the condensation of (S)-aspartate-beta-semialdehyde [(S)-ASA] and pyruvate to 4-hydroxy-tetrahydrodipicolinate (HTPA). The polypeptide is 4-hydroxy-tetrahydrodipicolinate synthase (Chlorobium phaeobacteroides (strain DSM 266 / SMG 266 / 2430)).